The primary structure comprises 64 residues: Large ribosomal subunit protein bL35 (64 aa).

The protein belongs to the bacterial ribosomal protein bL35 family.

This is Large ribosomal subunit protein bL35 from Shewanella halifaxensis (strain HAW-EB4).